Consider the following 89-residue polypeptide: Small ribosomal subunit protein uS15 (89 aa).

Belongs to the universal ribosomal protein uS15 family. As to quaternary structure, part of the 30S ribosomal subunit. Forms a bridge to the 50S subunit in the 70S ribosome, contacting the 23S rRNA.

In terms of biological role, one of the primary rRNA binding proteins, it binds directly to 16S rRNA where it helps nucleate assembly of the platform of the 30S subunit by binding and bridging several RNA helices of the 16S rRNA. Forms an intersubunit bridge (bridge B4) with the 23S rRNA of the 50S subunit in the ribosome. This is Small ribosomal subunit protein uS15 from Corynebacterium efficiens (strain DSM 44549 / YS-314 / AJ 12310 / JCM 11189 / NBRC 100395).